A 650-amino-acid chain; its full sequence is Glycoprotein 105 (650 aa).

A helical; Signal-anchor for type II membrane protein membrane pass occupies residues 1-32; that stretch reads MATARLGVMRPPRSCALIFLCAFSMATAPTNA. Over 33-650 the chain is Virion surface; it reads TAHRRAGTVK…RFPHVGIGSY (618 aa). Asn52, Asn290, Asn332, Asn338, Asn359, Asn422, Asn516, and Asn552 each carry an N-linked (GlcNAc...) asparagine; by host glycan.

As to quaternary structure, associates with the gp82-gp105 complex. In terms of processing, N-Glycosylated.

It localises to the virion membrane. This Homo sapiens (Human) protein is Glycoprotein 105 (U96/U97/U98/U99/U100).